The sequence spans 403 residues: Multifunctional CCA protein (403 aa).

Residues glycine 8 and arginine 11 each contribute to the ATP site. Residues glycine 8 and arginine 11 each contribute to the CTP site. Residues aspartate 21 and aspartate 23 each coordinate Mg(2+). Arginine 91, arginine 137, and arginine 140 together coordinate ATP. CTP-binding residues include arginine 91, arginine 137, and arginine 140. One can recognise an HD domain in the interval 228 to 329 (TGIHTLMVAK…LKVLGLLDVW (102 aa)).

This sequence belongs to the tRNA nucleotidyltransferase/poly(A) polymerase family. Bacterial CCA-adding enzyme type 1 subfamily. In terms of assembly, monomer. Can also form homodimers and oligomers. The cofactor is Mg(2+). Ni(2+) serves as cofactor.

It catalyses the reaction a tRNA precursor + 2 CTP + ATP = a tRNA with a 3' CCA end + 3 diphosphate. The enzyme catalyses a tRNA with a 3' CCA end + 2 CTP + ATP = a tRNA with a 3' CCACCA end + 3 diphosphate. Catalyzes the addition and repair of the essential 3'-terminal CCA sequence in tRNAs without using a nucleic acid template. Adds these three nucleotides in the order of C, C, and A to the tRNA nucleotide-73, using CTP and ATP as substrates and producing inorganic pyrophosphate. tRNA 3'-terminal CCA addition is required both for tRNA processing and repair. Also involved in tRNA surveillance by mediating tandem CCA addition to generate a CCACCA at the 3' terminus of unstable tRNAs. While stable tRNAs receive only 3'-terminal CCA, unstable tRNAs are marked with CCACCA and rapidly degraded. This is Multifunctional CCA protein from Vibrio cholerae serotype O1 (strain ATCC 39541 / Classical Ogawa 395 / O395).